Reading from the N-terminus, the 174-residue chain is uncharacterized protein (174 aa).

This is an uncharacterized protein from Homo sapiens (Human).